Here is a 209-residue protein sequence, read N- to C-terminus: Uracil phosphoribosyltransferase (209 aa).

5-phospho-alpha-D-ribose 1-diphosphate-binding positions include Arg79, Arg104, and 131-139 (DPMLATGGS). Residues Ile194 and 199–201 (GDA) contribute to the uracil site. Asp200 provides a ligand contact to 5-phospho-alpha-D-ribose 1-diphosphate.

This sequence belongs to the UPRTase family. Mg(2+) is required as a cofactor.

It carries out the reaction UMP + diphosphate = 5-phospho-alpha-D-ribose 1-diphosphate + uracil. Its pathway is pyrimidine metabolism; UMP biosynthesis via salvage pathway; UMP from uracil: step 1/1. Allosterically activated by GTP. Its function is as follows. Catalyzes the conversion of uracil and 5-phospho-alpha-D-ribose 1-diphosphate (PRPP) to UMP and diphosphate. This chain is Uracil phosphoribosyltransferase, found in Streptococcus salivarius.